The primary structure comprises 749 residues: MSFIDPYQHIIVEHQYSHKFTVVVLCATKVTKGAFGDMLDTPDPYVELFISTTPDSRKRTRHFNNDINPVWNETFEFILDPNQENVLEITLMDANYVMDETLGTATFPVSSMKVGEKKEVPFIFNQVTEMILEMSLEVCSCPDLRFSMALCDQEKTFRQQRKEHIRESMKKLLGPKNSEGLHSARDVPVVAILGSGGGFRAMVGFSGVMKALYESGILDCATYVAGLSGSTWYMSTLYSHPDFPEKGPEEINEELMKNVSHNPLLLLTPQKVKRYVESLWKKKSSGQPVTFTDIFGMLIGETLIHNRMNTTLSSLKEKVNTAQCPLPLFTCLHVKPDVSELMFADWVEFSPYEIGMAKYGTFMAPDLFGSKFFMGTVVKKYEENPLHFLMGVWGSAFSILFNRVLGVSGSQSRGSTMEEELENITTKHIVSNDSSDSDDESHEPKGTENEDAGSDYQSDNQASWIHRMIMALVSDSALFNTREGRAGKVHNFMLGLNLNTSYPLSPLSDFATQDSFDDDELDAAVADPDEFERIYEPLDVKSKKIHVVDSGLTFNLPYPLILRPQRGVDLIISFDFSARPSDSSPPFKELLLAEKWAKMNKLPFPKIDPYVFDREGLKECYVFKPKNPDMEKDCPTIIHFVLANINFRKYKAPGVPRETEEEKEIADFDIFDDPESPFSTFNFQYPNQAFKRLHDLMHFNTLNNIDVIKEAMVESIEYRRQNPSRCSVSLSNVEARRFFNKEFLSKPKA.

The phospholipid binding stretch occupies residues 1–178 (MSFIDPYQHI…MKKLLGPKNS (178 aa)). Ser-2 is modified (phosphoserine). The C2 domain occupies 6 to 122 (PYQHIIVEHQ…KVGEKKEVPF (117 aa)). Ca(2+)-binding residues include Asp-40, Thr-41, Asp-43, Asn-65, Asp-93, Ala-94, and Asn-95. The 601-residue stretch at 140–740 (SCPDLRFSMA…SNVEARRFFN (601 aa)) folds into the PLA2c domain. Catalysis depends on Ser-228, which acts as the Nucleophile. The residue at position 268 (Thr-268) is a Phosphothreonine. The segment at 409-457 (GSQSRGSTMEEELENITTKHIVSNDSSDSDDESHEPKGTENEDAGSDYQ) is disordered. Ser-434, Ser-435, and Ser-437 each carry phosphoserine. Ser-505 carries the phosphoserine; by MAPK modification. Position 515 is a phosphoserine (Ser-515). A Glycyl lysine isopeptide (Lys-Gly) (interchain with G-Cter in SUMO2) cross-link involves residue Lys-541. Asp-549 acts as the Proton acceptor in catalysis. Lys-606 participates in a covalent cross-link: Glycyl lysine isopeptide (Lys-Gly) (interchain with G-Cter in SUMO2). 2 positions are modified to phosphoserine: Ser-727 and Ser-729.

Interacts with KAT5. Phosphorylated at both Ser-505 and Ser-727 in response to mitogenic stimuli.

It localises to the cytoplasm. The protein localises to the golgi apparatus membrane. It is found in the nucleus envelope. The enzyme catalyses a 1,2-diacyl-sn-glycero-3-phosphocholine + H2O = a 1-acyl-sn-glycero-3-phosphocholine + a fatty acid + H(+). It catalyses the reaction a 1-O-alkyl-2-acyl-sn-glycero-3-phosphocholine + H2O = a 1-O-alkyl-sn-glycero-3-phosphocholine + a fatty acid + H(+). The catalysed reaction is a 1-acyl-sn-glycero-3-phosphocholine + H2O = sn-glycerol 3-phosphocholine + a fatty acid + H(+). It carries out the reaction 1-hexadecanoyl-2-(5Z,8Z,11Z,14Z-eicosatetraenoyl)-sn-glycero-3-phosphocholine + H2O = 1-hexadecanoyl-sn-glycero-3-phosphocholine + (5Z,8Z,11Z,14Z)-eicosatetraenoate + H(+). The enzyme catalyses 1,2-di-(5Z,8Z,11Z,14Z-eicosatetraenoyl)-sn-glycero-3-phosphocholine + H2O = 1-(5Z,8Z,11Z,14Z-eicosatetraenoyl)-sn-glycero-3-phosphocholine + (5Z,8Z,11Z,14Z)-eicosatetraenoate + H(+). It catalyses the reaction 1-octadecanoyl-2-(5Z,8Z,11Z,14Z-eicosatetraenoyl)-sn-glycero-3-phosphocholine + H2O = 1-octadecanoyl-sn-glycero-3-phosphocholine + (5Z,8Z,11Z,14Z)-eicosatetraenoate + H(+). The catalysed reaction is 1-hexadecanoyl-2-(9Z,12Z-octadecadienoyl)-sn-glycero-3-phosphocholine + H2O = (9Z,12Z)-octadecadienoate + 1-hexadecanoyl-sn-glycero-3-phosphocholine + H(+). It carries out the reaction 1-octadecanoyl-2-(9Z,12Z,15Z-octadecatrienoyl)-sn-glycero-3-phosphocholine + H2O = (9Z,12Z,15Z)-octadecatrienoate + 1-octadecanoyl-sn-glycero-3-phosphocholine + H(+). The enzyme catalyses 1-(5Z,8Z,11Z,14Z-eicosatetraenoyl)-2-hexadecanoyl-sn-glycero-3-phosphocholine + H2O = 1-(5Z,8Z,11Z,14Z-eicosatetraenoyl)-sn-glycero-3-phosphocholine + hexadecanoate + H(+). It catalyses the reaction 1-O-hexadecyl-2-(5Z,8Z,11Z,14Z)-eicosatetraenoyl-sn-glycero-3-phosphocholine + H2O = 1-O-hexadecyl-sn-glycero-3-phosphocholine + (5Z,8Z,11Z,14Z)-eicosatetraenoate + H(+). The catalysed reaction is 1,2-di-(9Z-octadecenoyl)-sn-glycero-3-phospho-(1'-sn-glycerol) + H2O = 1-(9Z-octadecenoyl)-sn-glycero-3-phospho-(1'-sn-glycerol) + (9Z)-octadecenoate + H(+). It carries out the reaction 1-octadecanoyl-2-(5Z,8Z,11Z,14Z-eicosatetraenoyl)-sn-glycero-3-phosphate + H2O = 1-octadecanoyl-sn-glycero-3-phosphate + (5Z,8Z,11Z,14Z)-eicosatetraenoate + H(+). The enzyme catalyses 1-hexadecanoyl-sn-glycero-3-phosphocholine + H2O = sn-glycerol 3-phosphocholine + hexadecanoate + H(+). It catalyses the reaction 2-(prostaglandin E2)-sn-glycero-3-phosphoethanolamine + H2O = sn-glycero-3-phosphoethanolamine + prostaglandin E2 + H(+). The catalysed reaction is 2-[(15S)-hydroxy-(5Z,8Z,11Z,13E)-eicosatetraenoyl]-sn-glycero-3-phosphocholine + H2O = (15S)-hydroxy-(5Z,8Z,11Z,13E)-eicosatetraenoate + sn-glycerol 3-phosphocholine + H(+). It carries out the reaction 2-[(15R)-hydroxy-(5Z,8Z,11Z,13E)-eicosatetraenoyl]-sn-glycero-3-phosphocholine + H2O = (15R)-hydroxy-(5Z,8Z,11Z,13E)-eicosatetraenoate + sn-glycerol 3-phosphocholine + H(+). The enzyme catalyses 2-(prostaglandin E2)-sn-glycero-3-phosphocholine + H2O = prostaglandin E2 + sn-glycerol 3-phosphocholine + H(+). It catalyses the reaction 2-[(11R)-hydroxy-(5Z,8Z,12E,14Z)-eicosatetraenoyl]-sn-glycero-3-phosphocholine + H2O = (11R)-hydroxy-(5Z,8Z,12E,14Z)-eicosatetraenoate + sn-glycerol 3-phosphocholine + H(+). The catalysed reaction is 1-(5Z,8Z,11Z,14Z-eicosatetraenoyl)-2-O-hexadecyl-sn-glycero-3-phosphocholine + H2O = 2-O-hexadecyl-sn-glycero-3-phosphocholine + (5Z,8Z,11Z,14Z)-eicosatetraenoate + H(+). It carries out the reaction 1-octadecanoyl-2-(5Z,8Z,11Z,14Z-eicosatetraenoyl)-sn-glycero-3-phosphocholine + glycerol = 1-(5Z,8Z,11Z,14Z-eicosatetraenoyl)-glycerol + 1-octadecanoyl-sn-glycero-3-phosphocholine. The enzyme catalyses 1-octadecanoyl-2-(9Z,12Z,15Z-octadecatrienoyl)-sn-glycero-3-phosphocholine + glycerol = 1-(9Z,12Z,15Z-octadecatrienoyl)-glycerol + 1-octadecanoyl-sn-glycero-3-phosphocholine. The protein operates within membrane lipid metabolism; glycerophospholipid metabolism. It participates in lipid metabolism; arachidonate metabolism. It functions in the pathway lipid metabolism; prostaglandin biosynthesis. Its pathway is lipid metabolism; leukotriene B4 biosynthesis. Its activity is regulated as follows. Activated by cytosolic calcium, which is necessary for binding to membrane lipids. Activated by phosphorylation in response to mitogenic stimuli. Has primarily calcium-dependent phospholipase and lysophospholipase activities, with a major role in membrane lipid remodeling and biosynthesis of lipid mediators of the inflammatory response. Plays an important role in embryo implantation and parturition through its ability to trigger prostanoid production. Preferentially hydrolyzes the ester bond of the fatty acyl group attached at sn-2 position of phospholipids (phospholipase A2 activity). Selectively hydrolyzes sn-2 arachidonoyl group from membrane phospholipids, providing the precursor for eicosanoid biosynthesis via the cyclooxygenase pathway. In an alternative pathway of eicosanoid biosynthesis, hydrolyzes sn-2 fatty acyl chain of eicosanoid lysophopholipids to release free bioactive eicosanoids. Hydrolyzes the ester bond of the fatty acyl group attached at sn-1 position of phospholipids (phospholipase A1 activity) only if an ether linkage rather than an ester linkage is present at the sn-2 position. This hydrolysis is not stereospecific. Has calcium-independent phospholipase A2 and lysophospholipase activities in the presence of phosphoinositides. Has O-acyltransferase activity. Catalyzes the transfer of fatty acyl chains from phospholipids to a primary hydroxyl group of glycerol (sn-1 or sn-3), potentially contributing to monoacylglycerol synthesis. The chain is Cytosolic phospholipase A2 (PLA2G4A) from Pongo abelii (Sumatran orangutan).